The chain runs to 975 residues: Probable dipeptidyl-aminopeptidase B (975 aa).

Basic and acidic residues predominate over residues 1–20 (MAEHGHNMWEEEPSKGRDSL). The tract at residues 1–111 (MAEHGHNMWE…LSAASGSAGK (111 aa)) is disordered. The Cytoplasmic portion of the chain corresponds to 1-125 (MAEHGHNMWE…YRMMDRGLRR (125 aa)). Low complexity predominate over residues 22–31 (SDSSASTTSL). A compositionally biased stretch (acidic residues) spans 68–84 (LDDEDPLKDEASGDYDL). The helical; Signal-anchor for type II membrane protein transmembrane segment at 126 to 146 (VLIIASLVFVTAWVGGLFIYI) threads the bilayer. At 147–975 (SHKSYLHGSE…IDNAKPQGKR (829 aa)) the chain is on the vacuolar side. Residues Asn-207, Asn-397, and Asn-622 are each glycosylated (N-linked (GlcNAc...) asparagine). The active-site Charge relay system is Ser-826. An N-linked (GlcNAc...) asparagine glycan is attached at Asn-885. Catalysis depends on charge relay system residues Asp-903 and His-936.

This sequence belongs to the peptidase S9B family.

Its subcellular location is the vacuole membrane. The enzyme catalyses Release of an N-terminal dipeptide, Xaa-Yaa-|-Zaa-, from a polypeptide, preferentially when Yaa is Pro, provided Zaa is neither Pro nor hydroxyproline.. Functionally, type IV dipeptidyl-peptidase which removes N-terminal dipeptides sequentially from polypeptides having unsubstituted N-termini provided that the penultimate residue is proline. In Grosmannia clavigera (strain kw1407 / UAMH 11150) (Blue stain fungus), this protein is Probable dipeptidyl-aminopeptidase B (DAPB).